Consider the following 912-residue polypeptide: Phosphoenolpyruvate carboxylase (912 aa).

Residues H138 and K575 contribute to the active site.

This sequence belongs to the PEPCase type 1 family. It depends on Mg(2+) as a cofactor.

The enzyme catalyses oxaloacetate + phosphate = phosphoenolpyruvate + hydrogencarbonate. Functionally, forms oxaloacetate, a four-carbon dicarboxylic acid source for the tricarboxylic acid cycle. In Lactobacillus acidophilus (strain ATCC 700396 / NCK56 / N2 / NCFM), this protein is Phosphoenolpyruvate carboxylase.